The chain runs to 316 residues: Retinol dehydrogenase 12 (316 aa).

An NADP(+)-binding site is contributed by 46-52 (GANTGIG). Ser-175 contacts substrate. Tyr-200 (proton acceptor) is an active-site residue.

It belongs to the short-chain dehydrogenases/reductases (SDR) family. In terms of tissue distribution, expressed in the retina.

The enzyme catalyses all-trans-retinol + NADP(+) = all-trans-retinal + NADPH + H(+). The catalysed reaction is 11-cis-retinol + NADP(+) = 11-cis-retinal + NADPH + H(+). It carries out the reaction 9-cis-retinol + NADP(+) = 9-cis-retinal + NADPH + H(+). It catalyses the reaction a 4-hydroxynonen-1-ol + NADP(+) = a 4-hydroxynonenal + NADPH + H(+). The enzyme catalyses (E)-non-2-en-1-ol + NADP(+) = (E)-non-2-enal + NADPH + H(+). The catalysed reaction is (Z)-non-6-en-1-ol + NADP(+) = (Z)-non-6-enal + NADPH + H(+). It carries out the reaction nonan-1-ol + NADP(+) = nonanal + NADPH + H(+). Its pathway is cofactor metabolism; retinol metabolism. Retinoids dehydrogenase/reductase with a clear preference for NADP. Displays high activity towards 9-cis, 11-cis and all-trans-retinal. Shows very weak activity towards 13-cis-retinol. Also exhibits activity, albeit with lower affinity than for retinaldehydes, towards lipid peroxidation products (C9 aldehydes) such as 4-hydroxynonenal and trans-2-nonenal. May play an important function in photoreceptor cells to detoxify 4-hydroxynonenal and potentially other toxic aldehyde products resulting from lipid peroxidation. Has no dehydrogenase activity towards steroids. This Bos taurus (Bovine) protein is Retinol dehydrogenase 12 (RDH12).